The chain runs to 205 residues: MTSGIMIASNVLLWGAFLALAALMLGVIRQIGLLHERSAPLGAMMIDHGPDIGERSPVFSMTTIDGVPVTVGRAVSPGRPSLLMFTGPSCPICQKLLPIIRSVAATEGADVILISDGTQAEHREFLRNHPLDGEHYVVSAEIGMRYQVSKVPYGVLLDKDGVIQAKGLCNTREHVESLFETTRVGHSTLQNFLKHGVEDASKHVH.

Residues 5–25 (IMIASNVLLWGAFLALAALML) traverse the membrane as a helical segment. Positions 50 to 184 (PDIGERSPVF…VESLFETTRV (135 aa)) constitute a Thioredoxin domain.

The protein localises to the membrane. Its pathway is one-carbon metabolism; methylamine degradation. Its function is as follows. May be specifically involved in the processing, transport, and/or maturation of the MADH beta-subunit. In Methylobacillus flagellatus (strain ATCC 51484 / DSM 6875 / VKM B-1610 / KT), this protein is Methylamine utilization protein MauD (mauD).